Reading from the N-terminus, the 93-residue chain is Small ribosomal subunit protein bS18c (93 aa).

It belongs to the bacterial ribosomal protein bS18 family. Part of the 30S ribosomal subunit.

It localises to the plastid. The protein localises to the chloroplast. This is Small ribosomal subunit protein bS18c from Pinus koraiensis (Korean pine).